Here is a 218-residue protein sequence, read N- to C-terminus: Phosphatidylserine decarboxylase proenzyme (218 aa).

The active-site Schiff-base intermediate with substrate; via pyruvic acid is the Ser-187. Position 187 is a pyruvic acid (Ser); by autocatalysis (Ser-187).

Belongs to the phosphatidylserine decarboxylase family. PSD-A subfamily. In terms of assembly, heterodimer of a large membrane-associated beta subunit and a small pyruvoyl-containing alpha subunit. It depends on pyruvate as a cofactor. Is synthesized initially as an inactive proenzyme. Formation of the active enzyme involves a self-maturation process in which the active site pyruvoyl group is generated from an internal serine residue via an autocatalytic post-translational modification. Two non-identical subunits are generated from the proenzyme in this reaction, and the pyruvate is formed at the N-terminus of the alpha chain, which is derived from the carboxyl end of the proenzyme. The post-translation cleavage follows an unusual pathway, termed non-hydrolytic serinolysis, in which the side chain hydroxyl group of the serine supplies its oxygen atom to form the C-terminus of the beta chain, while the remainder of the serine residue undergoes an oxidative deamination to produce ammonia and the pyruvoyl prosthetic group on the alpha chain.

It localises to the cell membrane. It carries out the reaction a 1,2-diacyl-sn-glycero-3-phospho-L-serine + H(+) = a 1,2-diacyl-sn-glycero-3-phosphoethanolamine + CO2. The protein operates within phospholipid metabolism; phosphatidylethanolamine biosynthesis; phosphatidylethanolamine from CDP-diacylglycerol: step 2/2. In terms of biological role, catalyzes the formation of phosphatidylethanolamine (PtdEtn) from phosphatidylserine (PtdSer). The protein is Phosphatidylserine decarboxylase proenzyme of Geobacter metallireducens (strain ATCC 53774 / DSM 7210 / GS-15).